We begin with the raw amino-acid sequence, 391 residues long: MEEDRLVFETSKGVEPIASFAEMGIKDDLLRGVYQYGFEKPSAIQQRAVLPIISGRDVIAQAQSGTGKTSMIALTVCQIVDTKSSEVQALILSPTRELAAQTEKVILAIGDYINVQAHACIGGKSVGEDIRKLEHGVQVVSGTPGRVCDMIKRRTLRTRGIKLLILDESDEMLSRGFKDQIYDVYRYLPPELQVVLISATLPNEILEITSKFMTDPVRILVKRDELTLEGIKQFFVAVEKEEWKFDTLCDLYDTLTITQAVIFCNTKRKVDWLTSKMRENNFTVSSMHGDMPQKERDAIMAEFRGGTTRVLITTDVWARGLDVQQVSLVINYDLPNNRELYIHRIGRSGRFGRKGVAINFVKSDDIKILRDIEQYYSTQIDEMPMNVADLI.

A Q motif motif is present at residues 18–46 (ASFAEMGIKDDLLRGVYQYGFEKPSAIQQ). The region spanning 49–219 (VLPIISGRDV…SKFMTDPVRI (171 aa)) is the Helicase ATP-binding domain. 62 to 69 (AQSGTGKT) lines the ATP pocket. The short motif at 167-170 (DESD) is the DEAD box element. Residues 230–391 (GIKQFFVAVE…EMPMNVADLI (162 aa)) enclose the Helicase C-terminal domain.

The protein belongs to the DEAD box helicase family. eIF4A subfamily. EIF4F is a multi-subunit complex, the composition of which varies with external and internal environmental conditions. It is composed of at least EIF4A, EIF4E and EIF4G.

The catalysed reaction is ATP + H2O = ADP + phosphate + H(+). In terms of biological role, ATP-dependent RNA helicase which is a subunit of the eIF4F complex involved in cap recognition and is required for mRNA binding to ribosome. In the current model of translation initiation, eIF4A unwinds RNA secondary structures in the 5'-UTR of mRNAs which is necessary to allow efficient binding of the small ribosomal subunit, and subsequent scanning for the initiator codon. The chain is Eukaryotic initiation factor 4A-3 from Nicotiana plumbaginifolia (Leadwort-leaved tobacco).